A 642-amino-acid chain; its full sequence is Threonine--tRNA ligase (642 aa).

A TGS domain is found at 1–61; it reads MPVITLPDGS…ENDATLSIIT (61 aa). The catalytic stretch occupies residues 243–534; that stretch reads DHRKIGKQLD…LTEEFAGFFP (292 aa). The Zn(2+) site is built by cysteine 334, histidine 385, and histidine 511.

It belongs to the class-II aminoacyl-tRNA synthetase family. Homodimer. It depends on Zn(2+) as a cofactor.

It is found in the cytoplasm. The enzyme catalyses tRNA(Thr) + L-threonine + ATP = L-threonyl-tRNA(Thr) + AMP + diphosphate + H(+). In terms of biological role, catalyzes the attachment of threonine to tRNA(Thr) in a two-step reaction: L-threonine is first activated by ATP to form Thr-AMP and then transferred to the acceptor end of tRNA(Thr). Also edits incorrectly charged L-seryl-tRNA(Thr). The chain is Threonine--tRNA ligase from Salmonella heidelberg (strain SL476).